Here is a 328-residue protein sequence, read N- to C-terminus: MTNNSTCIQPSVISTTALPVTYIFLFIIGLFGNSLAQWVFLTKIGKKTSTHIYLANLVTANLLVCTAMPFMGIYFLRGFYWKYQSVQCRLVNFLGTLSMHVSMFVSLLILSWIAISRYATLMKKESKQEATSCYERMFYGHVLKRFRQPNFARTMCIYIWGVVLVIIIPVTLYYSVVEATEEGQSQCYNRQMELGARPSQIAGLIGTTFIGFSFLVVVTSYYSLVSHLRRVRTCTSITEKDLTYRSVKRHLLIIQVLLVVCFLPYSIFKPIFYVLHQREGDCQQLNYLIEAKNILTCLASARSSTDPIIFLLLDKTFKKTLYGLLTKS.

Residues 1-11 are Extracellular-facing; it reads MTNNSTCIQPS. Asparagine 3 and asparagine 4 each carry an N-linked (GlcNAc...) asparagine glycan. Residues 12-32 form a helical membrane-spanning segment; sequence VISTTALPVTYIFLFIIGLFG. At 33 to 55 the chain is on the cytoplasmic side; that stretch reads NSLAQWVFLTKIGKKTSTHIYLA. Residues 56-76 traverse the membrane as a helical segment; sequence NLVTANLLVCTAMPFMGIYFL. The Extracellular segment spans residues 77–92; that stretch reads RGFYWKYQSVQCRLVN. A helical transmembrane segment spans residues 93–115; it reads FLGTLSMHVSMFVSLLILSWIAI. Over 116 to 156 the chain is Cytoplasmic; it reads SRYATLMKKESKQEATSCYERMFYGHVLKRFRQPNFARTMC. The helical transmembrane segment at 157 to 177 threads the bilayer; it reads IYIWGVVLVIIIPVTLYYSVV. The Extracellular portion of the chain corresponds to 178-197; that stretch reads EATEEGQSQCYNRQMELGAR. A helical transmembrane segment spans residues 198 to 218; sequence PSQIAGLIGTTFIGFSFLVVV. Topologically, residues 219–251 are cytoplasmic; the sequence is TSYYSLVSHLRRVRTCTSITEKDLTYRSVKRHL. The helical transmembrane segment at 252–272 threads the bilayer; sequence LIIQVLLVVCFLPYSIFKPIF. The Extracellular segment spans residues 273–328; that stretch reads YVLHQREGDCQQLNYLIEAKNILTCLASARSSTDPIIFLLLDKTFKKTLYGLLTKS.

It belongs to the G-protein coupled receptor 1 family.

It is found in the cell membrane. In terms of biological role, orphan receptor. In Mus musculus (Mouse), this protein is Probable G-protein coupled receptor 82 (Gpr82).